Here is an 827-residue protein sequence, read N- to C-terminus: Periplasmic nitrate reductase (827 aa).

Residues 1–34 (MSLTRRDFIKANAVAATAAAAGIATPAIAQPAKA) constitute a signal peptide (tat-type signal). Residues 36 to 92 (IRWDKGVCRFCGTGCAVLVGVQDGRVVATQGDPDSPVNRGLNCIKGYFLSKIMYGED) enclose the 4Fe-4S Mo/W bis-MGD-type domain. The [4Fe-4S] cluster site is built by Cys43, Cys46, Cys50, and Cys78. Mo-bis(molybdopterin guanine dinucleotide) contacts are provided by residues Lys80, Gln148, Asn173, Cys177, 210-217 (WGSNMAEM), 241-245 (STFEH), 260-262 (QTD), Met371, Gln375, Asn481, 507-508 (SD), Lys530, Asp557, and 717-726 (TGRVLEHWHS). Residue Phe793 participates in substrate binding. Asn801 and Lys818 together coordinate Mo-bis(molybdopterin guanine dinucleotide).

Belongs to the prokaryotic molybdopterin-containing oxidoreductase family. NasA/NapA/NarB subfamily. Component of the periplasmic nitrate reductase NapAB complex composed of NapA and NapB. [4Fe-4S] cluster serves as cofactor. It depends on Mo-bis(molybdopterin guanine dinucleotide) as a cofactor. Predicted to be exported by the Tat system. The position of the signal peptide cleavage has not been experimentally proven.

The protein resides in the periplasm. It catalyses the reaction 2 Fe(II)-[cytochrome] + nitrate + 2 H(+) = 2 Fe(III)-[cytochrome] + nitrite + H2O. In terms of biological role, catalytic subunit of the periplasmic nitrate reductase complex NapAB. Receives electrons from NapB and catalyzes the reduction of nitrate to nitrite. In Paramagnetospirillum magneticum (strain ATCC 700264 / AMB-1) (Magnetospirillum magneticum), this protein is Periplasmic nitrate reductase.